The sequence spans 657 residues: C4-dicarboxylate transport sensor protein DctS (657 aa).

Over 1 to 26 (MRDTTGGPAGAEVWTVPGLLGARKLD) the chain is Cytoplasmic. Residues 27-51 (LLALIPLVAIVALMTLVGALLFAVA) form a helical membrane-spanning segment. Over 52-252 (QSDANRARAK…AYDAPDAFGN (201 aa)) the chain is Periplasmic. A helical transmembrane segment spans residues 253–273 (AALLAAIGALSVFAVLAMVVL). The Cytoplasmic portion of the chain corresponds to 274-657 (HRNALRRRMA…LPVPQEGAPA (384 aa)). The PAS domain occupies 289 to 361 (AEMAFRRAME…ARQRQLIEGQ (73 aa)). The region spanning 365-417 (QAFETRFRRSDGSEIEVQVFEAPLIDAGGRHRGWMGSVIDITQAKQAARLARA) is the PAC domain. The inter-domain linker stretch occupies residues 407-422 (QAKQAARLARAQDESL). The region spanning 437-652 (TLAHELNQPL…VFTVTLPVPQ (216 aa)) is the Histidine kinase domain. The residue at position 440 (histidine 440) is a Phosphohistidine; by autocatalysis.

Its subcellular location is the cell inner membrane. The enzyme catalyses ATP + protein L-histidine = ADP + protein N-phospho-L-histidine.. Functionally, member of the two-component regulatory system DctS/DctR involved in the transport of C4-dicarboxylates. DctS functions as a membrane-associated protein kinase that phosphorylates DctR in response to environmental signals. This Rhodobacter capsulatus (Rhodopseudomonas capsulata) protein is C4-dicarboxylate transport sensor protein DctS (dctS).